Here is a 223-residue protein sequence, read N- to C-terminus: MIF4G domain-containing protein B (223 aa).

Residues 9-206 enclose the MIF4G domain; the sequence is DYKIQGFDAD…LEMIEYRAAG (198 aa).

It belongs to the MIF4GD family. Interacts with eif4g1, eif4g2 and slbp; probably tethered by SLBP to the 3'-end of mRNAs ending with the histone stem-loop, it also interacts with eif4g1 which is bound to their 5'-end.

It is found in the cytoplasm. Its subcellular location is the nucleus. Functions in replication-dependent translation of histone mRNAs which differ from other eukaryotic mRNAs in that they do not end with a poly-A tail but a stem-loop. May participate in circularizing those mRNAs specifically enhancing their translation. This chain is MIF4G domain-containing protein B (mif4gd-b), found in Xenopus laevis (African clawed frog).